A 503-amino-acid polypeptide reads, in one-letter code: Maturase K (503 aa).

This sequence belongs to the intron maturase 2 family. MatK subfamily.

The protein localises to the plastid. It is found in the chloroplast. Usually encoded in the trnK tRNA gene intron. Probably assists in splicing its own and other chloroplast group II introns. The chain is Maturase K from Vicia sativa (Spring vetch).